We begin with the raw amino-acid sequence, 78 residues long: Large ribosomal subunit protein eL20 (78 aa).

This sequence belongs to the eukaryotic ribosomal protein eL20 family. Part of the 50S ribosomal subunit. Binds 23S rRNA.

This chain is Large ribosomal subunit protein eL20, found in Pyrobaculum aerophilum (strain ATCC 51768 / DSM 7523 / JCM 9630 / CIP 104966 / NBRC 100827 / IM2).